The sequence spans 280 residues: DegV domain-containing protein TTE1491 (280 aa).

Residues 4 to 279 (IAIVTDSLSD…PDAAGVFFEE (276 aa)) form the DegV domain. Hexadecanoate is bound by residues Thr-61 and Ser-93.

Functionally, may bind long-chain fatty acids, such as palmitate, and may play a role in lipid transport or fatty acid metabolism. The chain is DegV domain-containing protein TTE1491 from Caldanaerobacter subterraneus subsp. tengcongensis (strain DSM 15242 / JCM 11007 / NBRC 100824 / MB4) (Thermoanaerobacter tengcongensis).